Here is a 208-residue protein sequence, read N- to C-terminus: MKLLPSVVLKLFLAAVFSALVTGESLERLRRGLADGTSNLVSPTESTDQLLPPGGGRGREVLDLEEADLDLLRADFSSKPQALATPSKEERGKRKKKGKGLGKKRDPCLRKYKDFCIHGECKYVKELRAPSCICHPGYHGERCHGLSLPVKNRLYTYDHTTILAVVAVVLSSVCLLVIVGLLMFRYHRRGGYDVENEEKVKLGVTASH.

Positions 1 to 23 are cleaved as a signal peptide; that stretch reads MKLLPSVVLKLFLAAVFSALVTG. The propeptide occupies 24-62; sequence ESLERLRRGLADGTSNLVSPTESTDQLLPPGGGRGREVL. Residues 24-161 lie on the Extracellular side of the membrane; the sequence is ESLERLRRGL…NRLYTYDHTT (138 aa). Residues 37 to 49 are compositionally biased toward polar residues; that stretch reads TSNLVSPTESTDQ. Disordered stretches follow at residues 37-57 and 81-104; these read TSNL…GGGR and QALA…LGKK. O-linked (GalNAc...) threonine glycosylation occurs at Thr85. The span at 93-102 shows a compositional bias: basic residues; that stretch reads KRKKKGKGLG. Residues 104 to 144 enclose the EGF-like domain; sequence KRDPCLRKYKDFCIHGECKYVKELRAPSCICHPGYHGERCH. Disulfide bonds link Cys108–Cys121, Cys116–Cys132, and Cys134–Cys143. The propeptide at 149–208 is C-terminal; it reads PVKNRLYTYDHTTILAVVAVVLSSVCLLVIVGLLMFRYHRRGGYDVENEEKVKLGVTASH. A helical transmembrane segment spans residues 162–182; sequence ILAVVAVVLSSVCLLVIVGLL. At 183 to 208 the chain is on the cytoplasmic side; sequence MFRYHRRGGYDVENEEKVKLGVTASH.

Interacts with FBLN1. Interacts with EGFR and ERBB4. In terms of processing, O-glycosylated. In terms of tissue distribution, macrophages, midbrain, cerebellum, hypothalamus, cerebral cortex, bulbourethral gland, lung, heart ventricle, kidney, skin, prostate, seminal vesicle, testis; at low levels in lymph node, thymus, spleen; not detected in pituitary, olfactory bulb, thyroid, duodenum, pancreas, liver, submaxillary gland.

Its subcellular location is the secreted. It is found in the extracellular space. The protein resides in the cell membrane. Its function is as follows. Growth factor that mediates its effects via EGFR, ERBB2 and ERBB4. Required for normal cardiac valve formation and normal heart function. Promotes smooth muscle cell proliferation. May be involved in macrophage-mediated cellular proliferation. It is mitogenic for fibroblasts, but not endothelial cells. It is able to bind EGF receptor/EGFR with higher affinity than EGF itself and is a far more potent mitogen for smooth muscle cells than EGF. Also acts as a diphtheria toxin receptor. This is Proheparin-binding EGF-like growth factor (HBEGF) from Sus scrofa (Pig).